We begin with the raw amino-acid sequence, 268 residues long: Indole-3-glycerol phosphate synthase 2 (268 aa).

Belongs to the TrpC family.

The enzyme catalyses 1-(2-carboxyphenylamino)-1-deoxy-D-ribulose 5-phosphate + H(+) = (1S,2R)-1-C-(indol-3-yl)glycerol 3-phosphate + CO2 + H2O. It functions in the pathway amino-acid biosynthesis; L-tryptophan biosynthesis; L-tryptophan from chorismate: step 4/5. The chain is Indole-3-glycerol phosphate synthase 2 (trpC2) from Ralstonia nicotianae (strain ATCC BAA-1114 / GMI1000) (Ralstonia solanacearum).